The primary structure comprises 160 residues: Large ribosomal subunit protein uL15 (160 aa).

Over residues 1-14 the composition is skewed to polar residues; the sequence is MKLNDISDNPGSSK. The tract at residues 1–35 is disordered; that stretch reads MKLNDISDNPGSSKSRMRVGRGIGSGKGKTCGRGV. Positions 21–35 are enriched in gly residues; the sequence is RGIGSGKGKTCGRGV.

The protein belongs to the universal ribosomal protein uL15 family. As to quaternary structure, part of the 50S ribosomal subunit.

In terms of biological role, binds to the 23S rRNA. This chain is Large ribosomal subunit protein uL15, found in Beijerinckia indica subsp. indica (strain ATCC 9039 / DSM 1715 / NCIMB 8712).